Reading from the N-terminus, the 108-residue chain is UPF0060 membrane protein SAB2216c (108 aa).

Helical transmembrane passes span 5–25, 31–51, 60–80, and 86–106; these read IFIF…IWLW, CSLV…IATF, VYAA…MVVD, and KYDV…LLPS.

Belongs to the UPF0060 family.

The protein localises to the cell membrane. The sequence is that of UPF0060 membrane protein SAB2216c from Staphylococcus aureus (strain bovine RF122 / ET3-1).